The primary structure comprises 350 residues: Biotin synthase (350 aa).

The Radical SAM core domain occupies 41–268; it reads NEVQISRLLS…KSRVRLSAGR (228 aa). [4Fe-4S] cluster is bound by residues C56, C60, and C63. Positions 100, 131, 191, and 263 each coordinate [2Fe-2S] cluster.

Belongs to the radical SAM superfamily. Biotin synthase family. In terms of assembly, homodimer. [4Fe-4S] cluster is required as a cofactor. Requires [2Fe-2S] cluster as cofactor.

It carries out the reaction (4R,5S)-dethiobiotin + (sulfur carrier)-SH + 2 reduced [2Fe-2S]-[ferredoxin] + 2 S-adenosyl-L-methionine = (sulfur carrier)-H + biotin + 2 5'-deoxyadenosine + 2 L-methionine + 2 oxidized [2Fe-2S]-[ferredoxin]. It participates in cofactor biosynthesis; biotin biosynthesis; biotin from 7,8-diaminononanoate: step 2/2. In terms of biological role, catalyzes the conversion of dethiobiotin (DTB) to biotin by the insertion of a sulfur atom into dethiobiotin via a radical-based mechanism. This is Biotin synthase from Shewanella piezotolerans (strain WP3 / JCM 13877).